Reading from the N-terminus, the 295-residue chain is Malonyl-[acyl-carrier protein] O-methyltransferase (295 aa).

The protein belongs to the methyltransferase superfamily.

The enzyme catalyses malonyl-[ACP] + S-adenosyl-L-methionine = malonyl-[ACP] methyl ester + S-adenosyl-L-homocysteine. It functions in the pathway cofactor biosynthesis; biotin biosynthesis. Functionally, converts the free carboxyl group of a malonyl-thioester to its methyl ester by transfer of a methyl group from S-adenosyl-L-methionine (SAM). It allows to synthesize pimeloyl-ACP via the fatty acid synthetic pathway. The chain is Malonyl-[acyl-carrier protein] O-methyltransferase from Halorhodospira halophila (strain DSM 244 / SL1) (Ectothiorhodospira halophila (strain DSM 244 / SL1)).